Consider the following 154-residue polypeptide: Histone H2B type F-M (154 aa).

Residues 1–18 show a composition bias toward low complexity; that stretch reads MAAASAMAEASSETTSEE. Residues 1 to 61 are disordered; that stretch reads MAAASAMAEA…RGDSFGDSFT (61 aa). The span at 34-50 shows a compositional bias: basic residues; it reads QKQKRRGCRGSRRRHAN.

This sequence belongs to the histone H2B family. In terms of assembly, the nucleosome is a histone octamer containing two molecules each of H2A, H2B, H3 and H4 assembled in one H3-H4 heterotetramer and two H2A-H2B heterodimers. The octamer wraps approximately 147 bp of DNA.

The protein localises to the nucleus. It is found in the chromosome. Core component of nucleosome. Nucleosomes wrap and compact DNA into chromatin, limiting DNA accessibility to the cellular machineries which require DNA as a template. Histones thereby play a central role in transcription regulation, DNA repair, DNA replication and chromosomal stability. DNA accessibility is regulated via a complex set of post-translational modifications of histones, also called histone code, and nucleosome remodeling. The protein is Histone H2B type F-M of Homo sapiens (Human).